Here is a 228-residue protein sequence, read N- to C-terminus: Cytidylate kinase (228 aa).

An ATP-binding site is contributed by 17–25; sequence GPTASGKGT.

The protein belongs to the cytidylate kinase family. Type 1 subfamily.

The protein localises to the cytoplasm. The catalysed reaction is CMP + ATP = CDP + ADP. The enzyme catalyses dCMP + ATP = dCDP + ADP. The sequence is that of Cytidylate kinase from Burkholderia multivorans (strain ATCC 17616 / 249).